The following is a 305-amino-acid chain: Ubiquinone biosynthesis protein COQ4 homolog, mitochondrial (305 aa).

Residues His-150, Asp-151, His-154, and Glu-166 each coordinate Zn(2+).

Belongs to the COQ4 family. As to quaternary structure, component of a multi-subunit COQ enzyme complex. Requires Zn(2+) as cofactor.

The protein resides in the mitochondrion inner membrane. The enzyme catalyses a 4-hydroxy-3-methoxy-5-(all-trans-polyprenyl)benzoate + H(+) = a 2-methoxy-6-(all-trans-polyprenyl)phenol + CO2. It functions in the pathway cofactor biosynthesis; ubiquinone biosynthesis. Lyase that catalyzes the C1-decarboxylation of 4-hydroxy-3-methoxy-5-(all-trans-polyprenyl)benzoic acid into 2-methoxy-6-(all-trans-polyprenyl)phenol during ubiquinone biosynthesis. This chain is Ubiquinone biosynthesis protein COQ4 homolog, mitochondrial, found in Cryptosporidium parvum (strain Iowa II).